Consider the following 355-residue polypeptide: Serum paraoxonase/arylesterase 1 (355 aa).

Cys-42 and Cys-353 are disulfide-bonded. Residues Glu-53 and Asp-54 each coordinate Ca(2+). His-115 (proton acceptor) is an active-site residue. The Ca(2+) site is built by Ile-117, Asn-168, Asp-169, and Asn-224. Asn-253 carries N-linked (GlcNAc...) asparagine glycosylation. Asp-269 and Asn-270 together coordinate Ca(2+). N-linked (GlcNAc...) asparagine glycans are attached at residues Asn-270 and Asn-324.

The protein belongs to the paraoxonase family. In terms of assembly, homodimer. Interacts with CLU. Ca(2+) serves as cofactor. Post-translationally, the signal sequence is not cleaved. Plasma, liver, kidney, heart, brain, small intestine and lung. In the plasma, associated with HDL.

It localises to the secreted. The protein resides in the extracellular space. The catalysed reaction is a phenyl acetate + H2O = a phenol + acetate + H(+). The enzyme catalyses An aryl dialkyl phosphate + H2O = dialkyl phosphate + an aryl alcohol.. It carries out the reaction an N-acyl-L-homoserine lactone + H2O = an N-acyl-L-homoserine + H(+). Its function is as follows. Hydrolyzes the toxic metabolites of a variety of organophosphorus insecticides. Capable of hydrolyzing a broad spectrum of organophosphate substrates and lactones, and a number of aromatic carboxylic acid esters. Mediates an enzymatic protection of low density lipoproteins against oxidative modification. In Mus musculus (Mouse), this protein is Serum paraoxonase/arylesterase 1 (Pon1).